The sequence spans 86 residues: Cytochrome c oxidase subunit 3 (86 aa).

Residues 1-15 (MAHQAHSYHMVDPSP) are Mitochondrial matrix-facing. The chain crosses the membrane as a helical span at residues 16–34 (WPIFGAAAALLTTSGLVMW). At 35–40 (FHYNSS) the chain is on the mitochondrial intermembrane side. Residues 41–66 (ILLAAGLLSMLLVMLQWWREIVREST) traverse the membrane as a helical segment. Residues 67–86 (FQGHHTPTVQKGLRYGMILF) lie on the Mitochondrial matrix side of the membrane.

Belongs to the cytochrome c oxidase subunit 3 family. Component of the cytochrome c oxidase (complex IV, CIV), a multisubunit enzyme composed of 14 subunits. The complex is composed of a catalytic core of 3 subunits MT-CO1, MT-CO2 and MT-CO3, encoded in the mitochondrial DNA, and 11 supernumerary subunits COX4I, COX5A, COX5B, COX6A, COX6B, COX6C, COX7A, COX7B, COX7C, COX8 and NDUFA4, which are encoded in the nuclear genome. The complex exists as a monomer or a dimer and forms supercomplexes (SCs) in the inner mitochondrial membrane with NADH-ubiquinone oxidoreductase (complex I, CI) and ubiquinol-cytochrome c oxidoreductase (cytochrome b-c1 complex, complex III, CIII), resulting in different assemblies (supercomplex SCI(1)III(2)IV(1) and megacomplex MCI(2)III(2)IV(2)).

The protein localises to the mitochondrion inner membrane. It catalyses the reaction 4 Fe(II)-[cytochrome c] + O2 + 8 H(+)(in) = 4 Fe(III)-[cytochrome c] + 2 H2O + 4 H(+)(out). Component of the cytochrome c oxidase, the last enzyme in the mitochondrial electron transport chain which drives oxidative phosphorylation. The respiratory chain contains 3 multisubunit complexes succinate dehydrogenase (complex II, CII), ubiquinol-cytochrome c oxidoreductase (cytochrome b-c1 complex, complex III, CIII) and cytochrome c oxidase (complex IV, CIV), that cooperate to transfer electrons derived from NADH and succinate to molecular oxygen, creating an electrochemical gradient over the inner membrane that drives transmembrane transport and the ATP synthase. Cytochrome c oxidase is the component of the respiratory chain that catalyzes the reduction of oxygen to water. Electrons originating from reduced cytochrome c in the intermembrane space (IMS) are transferred via the dinuclear copper A center (CU(A)) of subunit 2 and heme A of subunit 1 to the active site in subunit 1, a binuclear center (BNC) formed by heme A3 and copper B (CU(B)). The BNC reduces molecular oxygen to 2 water molecules using 4 electrons from cytochrome c in the IMS and 4 protons from the mitochondrial matrix. In Anas platyrhynchos (Mallard), this protein is Cytochrome c oxidase subunit 3 (MT-CO3).